A 92-amino-acid polypeptide reads, in one-letter code: mRNA interferase toxin YafQ (92 aa).

Catalysis depends on histidine 87, which acts as the Proton donor.

Belongs to the RelE toxin family. YafQ subfamily. Monomer in the absence of antitoxin. Forms a heterotetramer with antitoxin DinJ, with 2 YafQ-DinJ dimers associated via the N-terminus of the DinJ antitoxins (YafQ-(DinJ)2-YafQ). In this complex the toxin activity is inhibited. Binds the 70S ribosome via the 50S ribosomal subunit.

Functionally, toxic component of a type II toxin-antitoxin (TA) system. A sequence-specific mRNA endoribonuclease that inhibits translation elongation and induces bacterial stasis. Cleavage occurs between the second and third residue of the Lys codon followed by a G or A (5'AAA(G/A)3'), is reading-frame dependent and occurs within the 5' end of most mRNAs. Ribosome-binding confers the sequence specificity and reading frame-dependence. When overexpressed in liquid media YafQ partially inhibits protein synthesis, with a reduction in growth rate and colony growth rate. This effect is counteracted by coexpression with cognate antitoxin DinJ. YafQ and DinJ together bind their own promoter, and repress its expression. Its function is as follows. Cell death governed by the MazE-MazF and DinJ-YafQ TA systems seems to play a role in biofilm formation. The sequence is that of mRNA interferase toxin YafQ (yafQ) from Escherichia coli (strain K12).